Consider the following 39-residue polypeptide: Pro-opiomelanocortin (39 aa).

Residue serine 1 is modified to N-acetylserine. Valine 13 carries the post-translational modification Valine amide. Position 31 is a phosphoserine (serine 31).

This sequence belongs to the POMC family. Expressed in the pituitary gland.

The protein resides in the secreted. Functionally, precursor protein for pituitary hormones that regulate stress and environmental adaptation. In terms of biological role, stimulates the adrenal glands to release cortisol. Anorexigenic peptide. Increases the pigmentation of skin by increasing melanin production in melanocytes. The protein is Pro-opiomelanocortin (POMC) of Oryctolagus cuniculus (Rabbit).